A 282-amino-acid chain; its full sequence is Caspase-3 (282 aa).

Catalysis depends on residues His131 and Cys174.

Belongs to the peptidase C14A family. As to quaternary structure, heterotetramer that consists of two anti-parallel arranged heterodimers, each one formed by a 17 kDa (p17) and a 12 kDa (p12) subunit.

The protein resides in the cytoplasm. The enzyme catalyses Strict requirement for an Asp residue at positions P1 and P4. It has a preferred cleavage sequence of Asp-Xaa-Xaa-Asp-|- with a hydrophobic amino-acid residue at P2 and a hydrophilic amino-acid residue at P3, although Val or Ala are also accepted at this position.. In terms of biological role, important mediator of apoptosis. At the onset of apoptosis, it proteolytically cleaves poly(ADP-ribose) polymerase PARP1 at a '216-Asp-|-Gly-217' bond. The protein is Caspase-3 (casp3) of Xenopus laevis (African clawed frog).